Here is a 91-residue protein sequence, read N- to C-terminus: PqqA binding protein (91 aa).

Belongs to the PqqD family. As to quaternary structure, monomer. Interacts with PqqE.

Its pathway is cofactor biosynthesis; pyrroloquinoline quinone biosynthesis. Its function is as follows. Functions as a PqqA binding protein and presents PqqA to PqqE, in the pyrroloquinoline quinone (PQQ) biosynthetic pathway. This Pseudomonas fluorescens (strain Pf0-1) protein is PqqA binding protein.